Here is a 172-residue protein sequence, read N- to C-terminus: Pre-intermoult gene 1 protein (172 aa).

Residues 1–22 form the signal peptide; that stretch reads MKLTKLWLLFVCLGLFVTLVVS. A compositionally biased stretch (acidic residues) spans 25-45; the sequence is TDSDADSDSSADSDSSADSDE. The disordered stretch occupies residues 25 to 172; the sequence is TDSDADSDSS…RRNNNSRRRG (148 aa). 3 consecutive repeat copies span residues 27–32, 33–38, and 39–44. Residues 27–44 are 3 X 6 AA tandem repeats of S-S-A-D-S-D; that stretch reads SDADSDSSADSDSSADSD. Low complexity predominate over residues 55–77; that stretch reads TSTTESSATNSSGSSDDASGSSS. Positions 78–95 are enriched in acidic residues; the sequence is DVDDGSDDDTDSGSDTDY. The span at 104 to 172 shows a compositional bias: basic residues; that stretch reads VKKRANRKKA…RRNNNSRRRG (69 aa).

Low expression in first to third instar larvae salivary glands.

This Drosophila melanogaster (Fruit fly) protein is Pre-intermoult gene 1 protein (Pig1).